The primary structure comprises 269 residues: UPF0761 membrane protein NTHI0384 (269 aa).

Helical transmembrane passes span 32–52 (MLAIVPLVMVIFSIFSAFPVF), 89–109 (MSAVGIVSLIAVALMLINNID), 128–148 (FAIYWMILTLGPLIIGVSIGI), 168–188 (LLSFVPFLFTWFIFTLIYTVV), 203–223 (FLAAIFFTLGKQAFTWYVVTF), and 232–252 (AMATLPIMLLWIQISWLVVLV).

The protein belongs to the UPF0761 family.

The protein resides in the cell inner membrane. The chain is UPF0761 membrane protein NTHI0384 from Haemophilus influenzae (strain 86-028NP).